A 135-amino-acid chain; its full sequence is Large ribosomal subunit protein bL21 (135 aa).

Positions 85–135 are disordered; it reads YRVKRGHRQQYTQIEIESLNANGPASSDDEEAAETSDAEPDEDPEAEPAEA. Positions 93–107 are enriched in polar residues; that stretch reads QQYTQIEIESLNANG. The span at 111 to 135 shows a compositional bias: acidic residues; that stretch reads SDDEEAAETSDAEPDEDPEAEPAEA.

This sequence belongs to the bacterial ribosomal protein bL21 family. As to quaternary structure, part of the 50S ribosomal subunit. Contacts protein L20.

Its function is as follows. This protein binds to 23S rRNA in the presence of protein L20. The protein is Large ribosomal subunit protein bL21 of Salinibacter ruber (strain DSM 13855 / M31).